A 329-amino-acid polypeptide reads, in one-letter code: NTD biosynthesis operon regulator NtdR (329 aa).

An HTH lacI-type domain is found at 2 to 56; it reads PTIDEIAKLCNVSKTTVSRVLNNHPYVSKEKRDMILKAINELDYTPNYLARNFRR. A DNA-binding region (H-T-H motif) is located at residues 4-23; that stretch reads IDEIAKLCNVSKTTVSRVLN.

Positively regulates the ntdABC operon and negatively regulates its own transcription. Binds to NTD to induce ntdABC transcription. The protein is NTD biosynthesis operon regulator NtdR (ntdR) of Bacillus subtilis (strain 168).